Consider the following 407-residue polypeptide: S-adenosylmethionine synthase (407 aa).

Position 15 (His-15) interacts with ATP. Position 17 (Asp-17) interacts with Mg(2+). Residue Glu-43 participates in K(+) binding. L-methionine contacts are provided by Glu-56 and Gln-99. The interval 99 to 109 (QSPDIARGVDT) is flexible loop. The tract at residues 112 to 131 (ERRGGGTAPGGPGDELDRQG) is disordered. ATP is bound by residues 179-181 (DGK), 252-253 (RF), Asp-261, 267-268 (RK), Ala-284, and Lys-288. Asp-261 contacts L-methionine. Lys-292 is an L-methionine binding site.

Belongs to the AdoMet synthase family. Homotetramer; dimer of dimers. Mg(2+) is required as a cofactor. K(+) serves as cofactor.

Its subcellular location is the cytoplasm. The enzyme catalyses L-methionine + ATP + H2O = S-adenosyl-L-methionine + phosphate + diphosphate. It participates in amino-acid biosynthesis; S-adenosyl-L-methionine biosynthesis; S-adenosyl-L-methionine from L-methionine: step 1/1. Its function is as follows. Catalyzes the formation of S-adenosylmethionine (AdoMet) from methionine and ATP. The overall synthetic reaction is composed of two sequential steps, AdoMet formation and the subsequent tripolyphosphate hydrolysis which occurs prior to release of AdoMet from the enzyme. The protein is S-adenosylmethionine synthase of Streptomyces fradiae (Streptomyces roseoflavus).